Here is a 447-residue protein sequence, read N- to C-terminus: Na(+)-translocating NADH-quinone reductase subunit A (447 aa).

It belongs to the NqrA family. Composed of six subunits; NqrA, NqrB, NqrC, NqrD, NqrE and NqrF.

The enzyme catalyses a ubiquinone + n Na(+)(in) + NADH + H(+) = a ubiquinol + n Na(+)(out) + NAD(+). NQR complex catalyzes the reduction of ubiquinone-1 to ubiquinol by two successive reactions, coupled with the transport of Na(+) ions from the cytoplasm to the periplasm. NqrA to NqrE are probably involved in the second step, the conversion of ubisemiquinone to ubiquinol. The polypeptide is Na(+)-translocating NADH-quinone reductase subunit A (Photorhabdus laumondii subsp. laumondii (strain DSM 15139 / CIP 105565 / TT01) (Photorhabdus luminescens subsp. laumondii)).